Consider the following 902-residue polypeptide: 4-hydroxyphenylacetate decarboxylase glycyl radical subunit (902 aa).

The PFL domain maps to 38-774 (KRAEDLLDVY…ATLATPDGRL (737 aa)). Serine 348 and cysteine 507 together coordinate 4-hydroxyphenylacetate. The Cysteine radical intermediate role is filled by cysteine 507. The active-site Proton donor is the glutamate 509. The 4-hydroxyphenylacetate site is built by histidine 540 and glutamate 641. The Glycine radical domain occupies 782-902 (GSVSAYAGTD…VIARTEYEGV (121 aa)). Glycine 877 is subject to Glycine radical.

The protein belongs to the glycyl radical enzyme (GRE) family. HPAD subfamily. As to quaternary structure, heterooctamer consisting of 4 large (HpdB) subunits and 4 small (HpdC) subunits. Also forms a catalytically inactive homodimer. Post-translationally, phosphorylated on serine. Phosphorylation may trigger the formation of the active heterooctamers and thereby regulates enzyme activity. Requires the activating protein HpdA to generate the key active site glycyl radical that is involved in catalysis.

It catalyses the reaction 4-hydroxyphenylacetate + H(+) = 4-methylphenol + CO2. The catalysed reaction is 3,4-dihydroxyphenylacetate + H(+) = 4-methylcatechol + CO2. The enzyme catalyses 2-hydroxy-2-(4-hydroxyphenyl)acetate + H(+) = 4-hydroxybenzyl alcohol + CO2. Its activity is regulated as follows. Enzyme activity catalyzed by the HPA decarboxylase complex is rapidly and irreversibly inactivated by oxygen. Competitively inhibited by p-hydroxyphenylacetamide. Not inhibited by m- or o-hydroxyphenyl-acetate, p-hydroxybenzoate or p-hydroxyphenylpropionate. Glycyl radical subunit of the HPA decarboxylase that decarboxylates phenylacetates with a hydroxyl group in the p-position. Active toward 4-hydroxyphenylacetate, 3,4-dihydroxyphenylacetate and to a lesser extent p-hydroxymandelate (2-hydroxy-2-(4-hydroxyphenyl)acetate), forming 4-methylphenol, 4-methylcatechol and 4-hydroxybenzylalcohol, respectively. Is likely involved in the catabolism of aromatic amino acids such as tyrosine fermentation. 4-methylphenol (p-cresol) formation provides metabolic toxicity, which may benefit the pathogen C.difficile by suppression of the endogenous gastrointestinal microflora, allowing the development of gastrointestinal infections. The large subunit is the catalytic subunit that binds the substrate. This is 4-hydroxyphenylacetate decarboxylase glycyl radical subunit from Clostridioides difficile (Peptoclostridium difficile).